We begin with the raw amino-acid sequence, 146 residues long: Multiple coagulation factor deficiency protein 2 (146 aa).

Residues 1-26 (MTMRSLLRTPFLCGLLWAFCAPGARA) form the signal peptide. An EF-hand 1 domain is found at 68 to 103 (SPQELQLHYFKMHDYDGNNLLDGLELSTAITHVHKE). Ca(2+) contacts are provided by Asp-81, Asp-83, Asn-85, and Glu-92. Ser-106 is subject to Phosphoserine. The EF-hand 2 domain maps to 116–146 (ELINIIDGVLRDDDKNNDGYIDYAEFAKSLQ). Ca(2+) is bound by residues Asp-129, Asn-131, Asp-133, Tyr-135, and Glu-140.

Interacts in a calcium-dependent manner with LMAN1.

Its subcellular location is the endoplasmic reticulum-Golgi intermediate compartment. It is found in the endoplasmic reticulum. The protein localises to the golgi apparatus. Its function is as follows. The MCFD2-LMAN1 complex forms a specific cargo receptor for the ER-to-Golgi transport of selected proteins. Plays a role in the secretion of coagulation factors. This is Multiple coagulation factor deficiency protein 2 (MCFD2) from Homo sapiens (Human).